A 125-amino-acid polypeptide reads, in one-letter code: Small ribosomal subunit protein eS6 (125 aa).

This sequence belongs to the eukaryotic ribosomal protein eS6 family.

This Thermococcus onnurineus (strain NA1) protein is Small ribosomal subunit protein eS6.